The sequence spans 500 residues: MSKDATLPVRGTVAELKLEKKLPKKIDAIIVAIFEGEDSIELAGGEILDFIFSTEQQADILTQLEAVGAKATANSITRVPGTDVAPVIAVGLGKADLLDDETLRRASGTAARSLGGFENVATTIGDLGLAAAVTGFGLGSYSYAGLRKETEESKDKTTTVTFISTGKDDKDVFVEAQIIVESVLLARDLVNTPSSHLYPESYSVIASNEASKHGLQTTILDEKQLADQGFGGILAVGNGSSRKPRLLRIDWKPRKAKKSIALVGKGITFDTGGISIKPGASMENMISDMGGSASVLATIIAAARLNLSINVSAFLPMAENMPSGDAFRPGDVITHFGGITSEILNTDAEGRLILADAIAYASEDKPDYLIDAATLTGAQLVALGLRTSGVMGTDEFRDSVAKTGREVGEQAWAMPLPEELDEQVKSPVADLRNVTNSRFAGMSAAGRYLQEFVGADIEWAHVDIAGPAYNTAGEFGYTPKRATGQPVRTFVQVLKDLSES.

Mn(2+) contacts are provided by K265 and D270. Residue K277 is part of the active site. Mn(2+)-binding residues include D288, D347, and E349. The active site involves R351.

This sequence belongs to the peptidase M17 family. It depends on Mn(2+) as a cofactor.

Its subcellular location is the cytoplasm. The enzyme catalyses Release of an N-terminal amino acid, Xaa-|-Yaa-, in which Xaa is preferably Leu, but may be other amino acids including Pro although not Arg or Lys, and Yaa may be Pro. Amino acid amides and methyl esters are also readily hydrolyzed, but rates on arylamides are exceedingly low.. It catalyses the reaction Release of an N-terminal amino acid, preferentially leucine, but not glutamic or aspartic acids.. In terms of biological role, presumably involved in the processing and regular turnover of intracellular proteins. Catalyzes the removal of unsubstituted N-terminal amino acids from various peptides. The sequence is that of Probable cytosol aminopeptidase from Corynebacterium glutamicum (strain ATCC 13032 / DSM 20300 / JCM 1318 / BCRC 11384 / CCUG 27702 / LMG 3730 / NBRC 12168 / NCIMB 10025 / NRRL B-2784 / 534).